The sequence spans 141 residues: Drosulfakinins (141 aa).

The signal sequence occupies residues Met-1–Ala-31. Positions Gln-32–Asp-73 are excised as a propeptide. Position 82 is a phenylalanine amide (Phe-82). A propeptide spanning residues Val-86 to Ala-111 is cleaved from the precursor. Tyr-117 is modified (sulfotyrosine). Phe-122 carries the phenylalanine amide modification. Tyr-134 is modified (sulfotyrosine). Residue Phe-139 is modified to Phenylalanine amide.

This sequence belongs to the gastrin/cholecystokinin family.

The protein localises to the secreted. In terms of biological role, drosulfakinin-0 (DSK 0) plays diverse biological roles including regulating gut muscle contraction in adults but not in larvae. The chain is Drosulfakinins from Drosophila simulans (Fruit fly).